We begin with the raw amino-acid sequence, 46 residues long: Thymosin beta-a (46 aa).

A compositionally biased stretch (polar residues) spans 21–30; sequence TNTAEKNTLP. The tract at residues 21-46 is disordered; that stretch reads TNTAEKNTLPTKEDIDQEKKAAEGGK. Over residues 31–46 the composition is skewed to basic and acidic residues; that stretch reads TKEDIDQEKKAAEGGK.

This sequence belongs to the thymosin beta family.

Its subcellular location is the cytoplasm. The protein localises to the cytoskeleton. In terms of biological role, plays an important role in the organization of the cytoskeleton. Binds to and sequesters actin monomers (G actin) and therefore inhibits actin polymerization. The sequence is that of Thymosin beta-a from Cyprinus carpio (Common carp).